The primary structure comprises 422 residues: Cysteate synthase (422 aa).

Position 105 is an N6-(pyridoxal phosphate)lysine (K105). Pyridoxal 5'-phosphate-binding residues include N131 and T379.

Belongs to the threonine synthase family. Cysteate synthase subfamily. As to quaternary structure, homotrimer. The cofactor is pyridoxal 5'-phosphate.

The enzyme catalyses O-phospho-L-serine + sulfite + H(+) = L-cysteate + phosphate. It functions in the pathway cofactor biosynthesis; coenzyme M biosynthesis. Specifically catalyzes the beta-elimination of phosphate from L-phosphoserine and the beta-addition of sulfite to the dehydroalanine intermediate to produce L-cysteate. The protein is Cysteate synthase of Methanospirillum hungatei JF-1 (strain ATCC 27890 / DSM 864 / NBRC 100397 / JF-1).